We begin with the raw amino-acid sequence, 448 residues long: Glutamyl-tRNA(Gln) amidotransferase subunit D (448 aa).

Residues 92–423 (SEVKIISTGG…DKIRSLMLTN (332 aa)) enclose the Asparaginase/glutaminase domain. Active-site residues include threonine 102, threonine 178, aspartate 179, and lysine 257.

This sequence belongs to the asparaginase 1 family. GatD subfamily. In terms of assembly, heterodimer of GatD and GatE.

It carries out the reaction L-glutamyl-tRNA(Gln) + L-glutamine + ATP + H2O = L-glutaminyl-tRNA(Gln) + L-glutamate + ADP + phosphate + H(+). In terms of biological role, allows the formation of correctly charged Gln-tRNA(Gln) through the transamidation of misacylated Glu-tRNA(Gln) in organisms which lack glutaminyl-tRNA synthetase. The reaction takes place in the presence of glutamine and ATP through an activated gamma-phospho-Glu-tRNA(Gln). The GatDE system is specific for glutamate and does not act on aspartate. The sequence is that of Glutamyl-tRNA(Gln) amidotransferase subunit D from Sulfurisphaera tokodaii (strain DSM 16993 / JCM 10545 / NBRC 100140 / 7) (Sulfolobus tokodaii).